We begin with the raw amino-acid sequence, 453 residues long: Bifunctional protein GlmU (453 aa).

Residues M1–R227 are pyrophosphorylase. UDP-N-acetyl-alpha-D-glucosamine-binding positions include L9–G12, K23, Q74, G79–T80, Y101–D103, G138, E152, N167, and N225. D103 contacts Mg(2+). Mg(2+) is bound at residue N225. The segment at L228–A248 is linker. An N-acetyltransferase region spans residues G249–K453. Residues R331 and K349 each coordinate UDP-N-acetyl-alpha-D-glucosamine. The active-site Proton acceptor is the H361. Residues Y364 and N375 each contribute to the UDP-N-acetyl-alpha-D-glucosamine site. Acetyl-CoA is bound by residues A378, N384–Y385, S403, A421, and R438.

It in the N-terminal section; belongs to the N-acetylglucosamine-1-phosphate uridyltransferase family. In the C-terminal section; belongs to the transferase hexapeptide repeat family. Homotrimer. Requires Mg(2+) as cofactor.

The protein localises to the cytoplasm. The enzyme catalyses alpha-D-glucosamine 1-phosphate + acetyl-CoA = N-acetyl-alpha-D-glucosamine 1-phosphate + CoA + H(+). The catalysed reaction is N-acetyl-alpha-D-glucosamine 1-phosphate + UTP + H(+) = UDP-N-acetyl-alpha-D-glucosamine + diphosphate. The protein operates within nucleotide-sugar biosynthesis; UDP-N-acetyl-alpha-D-glucosamine biosynthesis; N-acetyl-alpha-D-glucosamine 1-phosphate from alpha-D-glucosamine 6-phosphate (route II): step 2/2. Its pathway is nucleotide-sugar biosynthesis; UDP-N-acetyl-alpha-D-glucosamine biosynthesis; UDP-N-acetyl-alpha-D-glucosamine from N-acetyl-alpha-D-glucosamine 1-phosphate: step 1/1. It participates in bacterial outer membrane biogenesis; LPS lipid A biosynthesis. Catalyzes the last two sequential reactions in the de novo biosynthetic pathway for UDP-N-acetylglucosamine (UDP-GlcNAc). The C-terminal domain catalyzes the transfer of acetyl group from acetyl coenzyme A to glucosamine-1-phosphate (GlcN-1-P) to produce N-acetylglucosamine-1-phosphate (GlcNAc-1-P), which is converted into UDP-GlcNAc by the transfer of uridine 5-monophosphate (from uridine 5-triphosphate), a reaction catalyzed by the N-terminal domain. This is Bifunctional protein GlmU from Histophilus somni (strain 129Pt) (Haemophilus somnus).